The chain runs to 185 residues: Ribosome-recycling factor (185 aa).

It belongs to the RRF family.

The protein resides in the cytoplasm. Its function is as follows. Responsible for the release of ribosomes from messenger RNA at the termination of protein biosynthesis. May increase the efficiency of translation by recycling ribosomes from one round of translation to another. The protein is Ribosome-recycling factor of Geobacter sp. (strain M21).